The primary structure comprises 101 residues: Therostasin (101 aa).

Positions 1-19 (MRGLAVLLLVACFCSVAFG) are cleaved as a signal peptide. Antistasin-like domains follow at residues 21–46 (CENT…TCLC) and 49–75 (CNDA…FCTC).

Salivary glands.

It is found in the secreted. Its function is as follows. Potent inhibitor of factor Xa. It also inhibits trypsin in a weaker manner. This is Therostasin from Theromyzon tessulatum (Duck leech).